We begin with the raw amino-acid sequence, 56 residues long: Meucin-25 (56 aa).

An N-terminal signal peptide occupies residues 1–31 (MFRIEYSLVQLLLRNVTIPLLLIIQMHIMSS).

This sequence belongs to the non-disulfide-bridged peptide (NDBP) superfamily. Antimalarial peptide (group 5) family. In terms of tissue distribution, expressed by the venom gland.

The protein resides in the secreted. This synthetic cationic peptide inhibits the development of Plasmodium berghei ookinetes, kills intraerythrocytic P.falciparum, and is cytotoxic to the Drosophila S2 cell at micromolar concentrations. No antibacterial, antifungal and hemolytic activities have been found at micromolar concentrations. The chain is Meucin-25 from Mesobuthus eupeus (Lesser Asian scorpion).